The sequence spans 323 residues: Peridinin-chlorophyll a-binding protein 3 (323 aa).

Tandem repeats lie at residues 1–173 (DGIA…RYVP) and 174–323 (DGPV…SAVV).

In terms of assembly, homotrimer.

It is found in the plastid. The protein resides in the chloroplast. Functionally, water-soluble antenna for capture of solar energy in the blue-green range. Peridinin is an asymmetric carotenoid. This is Peridinin-chlorophyll a-binding protein 3 from Amphidinium carterae (Dinoflagellate).